A 72-amino-acid polypeptide reads, in one-letter code: Translation initiation factor IF-1 (72 aa).

The 72-residue stretch at Met-1–Lys-72 folds into the S1-like domain.

This sequence belongs to the IF-1 family. In terms of assembly, component of the 30S ribosomal translation pre-initiation complex which assembles on the 30S ribosome in the order IF-2 and IF-3, IF-1 and N-formylmethionyl-tRNA(fMet); mRNA recruitment can occur at any time during PIC assembly.

It is found in the cytoplasm. Functionally, one of the essential components for the initiation of protein synthesis. Stabilizes the binding of IF-2 and IF-3 on the 30S subunit to which N-formylmethionyl-tRNA(fMet) subsequently binds. Helps modulate mRNA selection, yielding the 30S pre-initiation complex (PIC). Upon addition of the 50S ribosomal subunit IF-1, IF-2 and IF-3 are released leaving the mature 70S translation initiation complex. This chain is Translation initiation factor IF-1, found in Brucella suis biovar 1 (strain 1330).